Consider the following 131-residue polypeptide: Putative superoxide reductase (131 aa).

Positions 15, 17, 45, 51, 115, and 118 each coordinate Fe cation.

This sequence belongs to the desulfoferrodoxin family. Fe cation serves as cofactor.

The enzyme catalyses reduced [rubredoxin] + superoxide + 2 H(+) = oxidized [rubredoxin] + H2O2. Uses electrons from reduced NADP, by way of rubredoxin and an oxidoreductase, to catalyze the reduction of superoxide to hydrogen peroxide. The protein is Putative superoxide reductase of Thermotoga maritima (strain ATCC 43589 / DSM 3109 / JCM 10099 / NBRC 100826 / MSB8).